A 125-amino-acid chain; its full sequence is MTKSIGCDIIKVTRFNSFLQNRKKLERFFTQREIENSAMKGKGVLESLAGKFSAKESLIKALSPLINIKIKYSLKDIEIISLPKGNIIFQLHNDIKTLINQMNLKLYLTISHEREYAIAFVIVEN.

Mg(2+) is bound by residues aspartate 8 and glutamate 56.

The protein belongs to the P-Pant transferase superfamily. AcpS family. Mg(2+) serves as cofactor.

The protein resides in the cytoplasm. It carries out the reaction apo-[ACP] + CoA = holo-[ACP] + adenosine 3',5'-bisphosphate + H(+). Its function is as follows. Transfers the 4'-phosphopantetheine moiety from coenzyme A to a Ser of acyl-carrier-protein. The protein is Holo-[acyl-carrier-protein] synthase of Borrelia turicatae (strain 91E135).